The primary structure comprises 21 residues: AKPAKRVAVTGAAGQIAYSLL.

11–17 (GAAGQIA) provides a ligand contact to NAD(+).

The protein belongs to the LDH/MDH superfamily. MDH type 2 family.

The enzyme catalyses (S)-malate + NAD(+) = oxaloacetate + NADH + H(+). Functionally, catalyzes the reversible oxidation of malate to oxaloacetate. The chain is Malate dehydrogenase (mdh) from Vogesella indigofera (Pseudomonas indigofera).